Here is a 94-residue protein sequence, read N- to C-terminus: Large ribosomal subunit protein bL25 (94 aa).

Belongs to the bacterial ribosomal protein bL25 family. Part of the 50S ribosomal subunit; part of the 5S rRNA/L5/L18/L25 subcomplex. Contacts the 5S rRNA. Binds to the 5S rRNA independently of L5 and L18.

In terms of biological role, this is one of the proteins that binds to the 5S RNA in the ribosome where it forms part of the central protuberance. This chain is Large ribosomal subunit protein bL25, found in Salmonella arizonae (strain ATCC BAA-731 / CDC346-86 / RSK2980).